A 350-amino-acid polypeptide reads, in one-letter code: Uroporphyrinogen decarboxylase (350 aa).

Residues 23–27, D73, Y150, T205, and H322 contribute to the substrate site; that span reads RQAGR.

It belongs to the uroporphyrinogen decarboxylase family. As to quaternary structure, homodimer.

It localises to the cytoplasm. It carries out the reaction uroporphyrinogen III + 4 H(+) = coproporphyrinogen III + 4 CO2. The protein operates within porphyrin-containing compound metabolism; protoporphyrin-IX biosynthesis; coproporphyrinogen-III from 5-aminolevulinate: step 4/4. Its function is as follows. Catalyzes the decarboxylation of four acetate groups of uroporphyrinogen-III to yield coproporphyrinogen-III. The chain is Uroporphyrinogen decarboxylase from Methylococcus capsulatus (strain ATCC 33009 / NCIMB 11132 / Bath).